The sequence spans 475 residues: Ribulose bisphosphate carboxylase large chain (475 aa).

The propeptide occupies 1–2; it reads MS. Position 3 is an N-acetylproline (Pro3). The residue at position 14 (Lys14) is an N6,N6,N6-trimethyllysine. Residues Asn123 and Thr173 each contribute to the substrate site. The Proton acceptor role is filled by Lys175. Lys177 provides a ligand contact to substrate. Residues Lys201, Asp203, and Glu204 each contribute to the Mg(2+) site. Lys201 bears the N6-carboxylysine mark. The Proton acceptor role is filled by His294. Arg295, His327, and Ser379 together coordinate substrate.

It belongs to the RuBisCO large chain family. Type I subfamily. Heterohexadecamer of 8 large chains and 8 small chains; disulfide-linked. The disulfide link is formed within the large subunit homodimers. Mg(2+) is required as a cofactor. The disulfide bond which can form in the large chain dimeric partners within the hexadecamer appears to be associated with oxidative stress and protein turnover.

The protein localises to the plastid. It is found in the chloroplast. It catalyses the reaction 2 (2R)-3-phosphoglycerate + 2 H(+) = D-ribulose 1,5-bisphosphate + CO2 + H2O. The enzyme catalyses D-ribulose 1,5-bisphosphate + O2 = 2-phosphoglycolate + (2R)-3-phosphoglycerate + 2 H(+). Functionally, ruBisCO catalyzes two reactions: the carboxylation of D-ribulose 1,5-bisphosphate, the primary event in carbon dioxide fixation, as well as the oxidative fragmentation of the pentose substrate in the photorespiration process. Both reactions occur simultaneously and in competition at the same active site. This is Ribulose bisphosphate carboxylase large chain from Calycanthus floridus var. glaucus (Eastern sweetshrub).